Reading from the N-terminus, the 414-residue chain is MKTVTISKERLRIHIEQLGEIGKTKDKGVQRLALSKEDREATLLVSEWMREAGLTVTHDHFGNLIGRKEGETPSLPSVMIGSHIDSVRNGGKFDGVIGVLAGIEIVHAISEANVVHEHSIEVVAFCEEEGSRFNDGLFGSRGMVGKVKPEDLQKVDDNNVTRYEALKTFGFGIDPDFTHQSIREIGDIKHYFEMHIEQGPYLEKNNYPIGIVSGIAGPSWFKVRLVGEAGHAGTVPMSLRKDPLVGAAEVIKEVETLCMNDPNAPTVGTVGRIAAFPGGSNIIPESVEFTLDIRDIELERRNKIIEKIEEKIKLVSNTRGLEYQIEKNMAAVPVKCSENLINSLKQSCKELEIDAPIIVSGAGHDAMFLAEITEIGMVFVRCRNGISHSPKEWAEIDDILTGTKVLYESIIKHI.

A divalent metal cation-binding residues include histidine 83, aspartate 94, glutamate 129, and histidine 195. An N-carbamoyl-L-alpha-amino acid contacts are provided by glutamine 198, histidine 231, asparagine 281, arginine 294, and glycine 363. The interval 214-333 (GIAGPSWFKV…QIEKNMAAVP (120 aa)) is involved in dimerization. Residue histidine 388 coordinates a divalent metal cation.

This sequence belongs to the peptidase M20 family. As to quaternary structure, homodimer. The cofactor is Mn(2+). It depends on Ni(2+) as a cofactor. Co(2+) serves as cofactor. Fe(2+) is required as a cofactor.

It catalyses the reaction an N-carbamoyl-L-alpha-amino acid + H2O + 2 H(+) = an L-alpha-amino acid + NH4(+) + CO2. It carries out the reaction N-carbamoyl-L-methionine + H2O + 2 H(+) = L-methionine + NH4(+) + CO2. Catalyzes the hydrolysis of N-carbamoyl-L-alpha-amino acids to free L-alpha-amino acids. Is strictly L-specific since it is inactive toward N-carbamoyl-D-alpha-amino acids. This is N-carbamoyl-L-amino-acid amidohydrolase from Pseudomonas sp. (strain NS671).